A 576-amino-acid polypeptide reads, in one-letter code: Catalase-peroxidase (576 aa).

Positions Trp95 to Tyr224 form a cross-link, tryptophyl-tyrosyl-methioninium (Trp-Tyr) (with M-250). His96 (proton acceptor) is an active-site residue. The tryptophyl-tyrosyl-methioninium (Tyr-Met) (with W-95) cross-link spans Tyr224–Met250. Residue His265 coordinates heme b.

The protein belongs to the peroxidase family. Peroxidase/catalase subfamily. As to quaternary structure, homotetramer. It depends on heme b as a cofactor. Formation of the three residue Trp-Tyr-Met cross-link is important for the catalase, but not the peroxidase activity of the enzyme.

The catalysed reaction is H2O2 + AH2 = A + 2 H2O. It catalyses the reaction 2 H2O2 = O2 + 2 H2O. In terms of biological role, bifunctional enzyme with both catalase and broad-spectrum peroxidase activity. Also displays NADH oxidase, INH lyase and isonicotinoyl-NAD synthase activities. Important for stationary phase survival. This Rhodobacter capsulatus (Rhodopseudomonas capsulata) protein is Catalase-peroxidase (katG).